Reading from the N-terminus, the 258-residue chain is 1-(5-phosphoribosyl)-5-[(5-phosphoribosylamino)methylideneamino] imidazole-4-carboxamide isomerase (258 aa).

D17 functions as the Proton acceptor in the catalytic mechanism. Catalysis depends on D136, which acts as the Proton donor.

Belongs to the HisA/HisF family.

It localises to the cytoplasm. The enzyme catalyses 1-(5-phospho-beta-D-ribosyl)-5-[(5-phospho-beta-D-ribosylamino)methylideneamino]imidazole-4-carboxamide = 5-[(5-phospho-1-deoxy-D-ribulos-1-ylimino)methylamino]-1-(5-phospho-beta-D-ribosyl)imidazole-4-carboxamide. It functions in the pathway amino-acid biosynthesis; L-histidine biosynthesis; L-histidine from 5-phospho-alpha-D-ribose 1-diphosphate: step 4/9. In Corynebacterium jeikeium (strain K411), this protein is 1-(5-phosphoribosyl)-5-[(5-phosphoribosylamino)methylideneamino] imidazole-4-carboxamide isomerase.